Consider the following 178-residue polypeptide: Cytidylate kinase (178 aa).

7-15 provides a ligand contact to ATP; the sequence is GLPGTGTTT.

This sequence belongs to the cytidylate kinase family. Type 2 subfamily.

Its subcellular location is the cytoplasm. It carries out the reaction CMP + ATP = CDP + ADP. It catalyses the reaction dCMP + ATP = dCDP + ADP. The chain is Cytidylate kinase (cmk) from Methanocaldococcus jannaschii (strain ATCC 43067 / DSM 2661 / JAL-1 / JCM 10045 / NBRC 100440) (Methanococcus jannaschii).